The sequence spans 653 residues: Calpain-10 (653 aa).

The Calpain catalytic domain occupies 13–321 (LFRDAAFPAA…FDEITIGYPI (309 aa)). Catalysis depends on residues cysteine 73, histidine 238, and asparagine 263. Domain III regions lie at residues 322–494 (TEAG…VSLS) and 513–653 (EWGT…PSWQ).

This sequence belongs to the peptidase C2 family.

Functionally, calcium-regulated non-lysosomal thiol-protease which catalyzes limited proteolysis of substrates involved in cytoskeletal remodeling and signal transduction. May play a role in insulin-stimulated glucose uptake. This Macaca fascicularis (Crab-eating macaque) protein is Calpain-10 (CAPN10).